A 599-amino-acid polypeptide reads, in one-letter code: uncharacterized protein (599 aa).

Low complexity predominate over residues 1 to 13 (MSSSSSHNSFSGS). 2 disordered regions span residues 1-27 (MSSS…IDGL) and 41-86 (YPSN…DDTN). The segment covering 14 to 27 (KTNAAEGQNSIDGL) has biased composition (polar residues). The segment covering 44–70 (NEEKEVKETDIVPDENKVNELDVHKQS) has biased composition (basic and acidic residues). Transmembrane regions (helical) follow at residues 97–117 (IVVP…TIVT), 135–155 (WIGS…GVFC), 162–182 (IVLY…GASQ), 192–212 (AIQG…ISDI), 223–243 (GILA…GGAI), 251–271 (WIFF…VVFL), 290–310 (FIGL…ISLG), 321–341 (ILCY…YDTF), 359–379 (AALL…AYYV), 396–416 (VHTI…GMVL), 423–443 (LPLI…MICV), 452–472 (VMGL…PPLI), 489–509 (TLMF…EVIF), and 552–572 (VIWI…FFIK).

Belongs to the major facilitator superfamily. TCR/Tet family.

The protein resides in the membrane. This is an uncharacterized protein from Schizosaccharomyces pombe (strain 972 / ATCC 24843) (Fission yeast).